A 395-amino-acid chain; its full sequence is MAAPCFLTLRVATLAALALLSLGSSAAGHIEDQAEQFFRSGHTNNWAVLVCTSRFWFNYRHVANTLSVYRSVKRLGIPDSHIVLMLADDMACNARNPKPATVFSHKNMELNVYGDDVEVDYRSYEVTVENFLRVLTGRVPPSTPRSKRLLSDDRSNILIYMTGHGGNGFLKFQDSEEITNIELADAFEQMWQKRRYNELLFIIDTCQGASMYERFYSPNIMALASSQVGEDSLSHQPDPAIGVHLMDRYTFYVLEFLEEINPASQTNMNDLFQVCPKSLCVSTPGHRTDLFQRDPKNVLITDFFGSVRKVEITTEKISLQWDSQVVDSSSKEDGTAEERMGPLKYAEQLPVAQIIHQKPKPRDWHPPGGFILGLWALIIMVFFKTYGIKHMKFIF.

A signal peptide spans 1–27; the sequence is MAAPCFLTLRVATLAALALLSLGSSAA. At 28 to 368 the chain is on the lumenal side; that stretch reads GHIEDQAEQF…PKPRDWHPPG (341 aa). Ca(2+) contacts are provided by Asp79, Ile82, Glu118, and Asp120. The Proton donor role is filled by His164. The active-site Nucleophile; acyl-thioester intermediate is the Cys206. 3 residues coordinate a protein: Cys206, Ser232, and Ser234. Residues 231–236 form an autoinhibitory loop region; that stretch reads DSLSHQ. Cys275 and Cys280 are joined by a disulfide. The helical transmembrane segment at 369-385 threads the bilayer; sequence GFILGLWALIIMVFFKT. The Cytoplasmic segment spans residues 386-395; the sequence is YGIKHMKFIF.

It belongs to the peptidase C13 family. In terms of assembly, heteropentamer. Part of the GPI-anchor transamidase complex, consisting of PIGK, PIGT, PIGS, PIGU and GAA1. Interacts with GPAA1. Interacts with PIGT; this interaction, via a disulfide link, stabilizes the expression of GAA1 and PIGK and links them to PIGS. The disulfide bond between PIGK/GPI8 and PIGT is important for normal enzyme activity.

It localises to the endoplasmic reticulum membrane. It functions in the pathway glycolipid biosynthesis; glycosylphosphatidylinositol-anchor biosynthesis. In the absence of proproteins substrates, exists in an inactive state with a disrupted catalytic site by an autoinhibitory loop. The binding of proprotein substrates, particularly the CSP region, to GPI-T triggers concerted conformational changes that alleviate the inhibition by the autoinhibitory loop. Meanwhile, proprotein residues near the omega- site induce the formation of a catalytic cleft for catalysis, following which the products are released and GPI-T reverts to the inactive state. Functionally, catalytic subunit of the glycosylphosphatidylinositol-anchor (GPI-anchor) transamidase (GPI-T) complex that catalyzes the formation of the linkage between a proprotein and a GPI-anchor and participates in GPI anchored protein biosynthesis. Recognizes diverse proproteins at a C-terminal signal peptide (CSP) region that lacks consensus sequence and replaces it with a GPI-anchor via a transamidation reaction. Transamidation catalysis reaction follows a two-phase mechanism. In the acyl-enzyme phase, the carbonyl group of the proproteins's omega-site undergoes a nucleophilic attack forming an enzyme-substrate thioester bond. Followed by a general acid catalysis that allows CSP releasing, regenerating the carbonyl, and forming the acyl-enzyme intermediate. In the GPI-anchor attachment phase, the amino group of the GPI-anchor's ethanolamine phosphate, the one on third mannose (EtNP3), mediates a nucleophilic attack on the carbonyl of the acyl-enzyme intermediate, replacing the CSP, allowing GPI-anchor attachment to the omega-residue, therefore forming the product and freeing the enzyme. This is GPI-anchor transamidase from Mus musculus (Mouse).